We begin with the raw amino-acid sequence, 156 residues long: Ribosomal RNA large subunit methyltransferase H (156 aa).

S-adenosyl-L-methionine is bound by residues leucine 73, glycine 104, and 123–128 (LSALTL).

This sequence belongs to the RNA methyltransferase RlmH family. In terms of assembly, homodimer.

Its subcellular location is the cytoplasm. It catalyses the reaction pseudouridine(1915) in 23S rRNA + S-adenosyl-L-methionine = N(3)-methylpseudouridine(1915) in 23S rRNA + S-adenosyl-L-homocysteine + H(+). In terms of biological role, specifically methylates the pseudouridine at position 1915 (m3Psi1915) in 23S rRNA. This chain is Ribosomal RNA large subunit methyltransferase H, found in Erwinia tasmaniensis (strain DSM 17950 / CFBP 7177 / CIP 109463 / NCPPB 4357 / Et1/99).